A 20-amino-acid polypeptide reads, in one-letter code: GKPNRPRPAPIQPRPPHPRL.

The segment at 1-20 (GKPNRPRPAPIQPRPPHPRL) is disordered.

The protein belongs to the apidaecin family.

The protein localises to the secreted. Antimicrobial peptide active against many Gram-negative enterobacterial and plant-associated bacterial species. Not active against other bacterial species like H.pylori, P.mirabilis, B.pertussis or N.gonorrhoeae. In terms of biological role, among others, also active against C.jejuni and L.pneumophila but not against Y.enterocolitica. Its function is as follows. Among others, also active against Y.enterocolitica butnot against L.pneumophila and C.jejuni. This chain is Apidaecin 1+, found in Pimpla disparis (Parasitic wasp).